The sequence spans 531 residues: CCA tRNA nucleotidyltransferase, mitochondrial (531 aa).

It belongs to the tRNA nucleotidyltransferase/poly(A) polymerase family.

The protein localises to the mitochondrion. It is found in the cytoplasm. Its subcellular location is the nucleus. The enzyme catalyses a tRNA precursor + 2 CTP + ATP = a tRNA with a 3' CCA end + 3 diphosphate. Functionally, nucleotidyltransferase that catalyzes the addition and repair of the essential 3'-terminal CCA sequence in tRNAs, which is necessary for the attachment of amino acids to the 3' terminus of tRNA molecules, using CTP and ATP as substrates. tRNA 3'-terminal CCA addition is required both for tRNA processing and repair. Also involved in tRNA surveillance by mediating tandem CCA addition to generate a CCACCA at the 3' terminus of unstable tRNAs. While stable tRNAs receive only 3'-terminal CCA, unstable tRNAs are marked with CCACCA and rapidly degraded. The structural flexibility of RNA controls the choice between CCA versus CCACCA addition: following the first CCA addition cycle, nucleotide-binding to the active site triggers a clockwise screw motion, producing torque on the RNA. This ejects stable RNAs, whereas unstable RNAs are refolded while bound to the enzyme and subjected to a second CCA catalytic cycle. This chain is CCA tRNA nucleotidyltransferase, mitochondrial (CCA1), found in Candida glabrata (strain ATCC 2001 / BCRC 20586 / JCM 3761 / NBRC 0622 / NRRL Y-65 / CBS 138) (Yeast).